A 408-amino-acid chain; its full sequence is Photox toxin (408 aa).

The tract at residues 168–196 (NNQQHIKDSDGRKPVNNMPPPPPPPMADK) is disordered. The span at 184–193 (NMPPPPPPPM) shows a compositional bias: pro residues. The 204-residue stretch at 190 to 393 (PPPMADKTQK…LRLTDDASAD (204 aa)) folds into the TR mART core domain. Catalysis depends on residues Arg288, Ser318, and Glu355.

It in the C-terminal section; belongs to the SpvB family.

It catalyses the reaction L-arginyl-[protein] + NAD(+) = N(omega)-(ADP-D-ribosyl)-L-arginyl-[protein] + nicotinamide + H(+). In terms of biological role, mono-ADP-ribosylates chicken skeletal alpha-actin and human non-skeletal beta- and gamma-actin. Mono-ADP-ribosylates 'Arg-177' of yeast actin, blocking its ability to polymerize. Does not possess NAD(+)-glycohydrolase activity, unlike most mART enzymes. Upon expression in S.cerevisiae almost completely inhibits growth. The protein is Photox toxin (phxA) of Photorhabdus laumondii subsp. laumondii (strain DSM 15139 / CIP 105565 / TT01) (Photorhabdus luminescens subsp. laumondii).